We begin with the raw amino-acid sequence, 326 residues long: MLTLARQQQRQNIRWLLCLSVLMLLALLLSLCAGELWILPGDWFSPRGELFVWQIRLPRTLAVLLVGAALAISGAVMQALFENPLAEPGLLGVSNGAGVGLIAAVLLGQGQLPNWALGLCAIAGALIITLILLRFARRHLSTSRLLLAGVALGIICSALMTWAIYFSTSVDLRQLMYWMMGGFGGVDWRQSWLMLALIPVLLWICCQSRPMNILALGEISARQLGLPLWFWRNVLVAATGWMVGVSVALAGAIGFIGLVIPHILRLCGLTDHRVLLPGCALAGASALLLADIVARLALAAAELPIGVVTATLGAPVFIWLLLKAGR.

9 helical membrane passes run L19 to L39, L61 to F81, P88 to G108, L112 to L132, L146 to F166, G184 to I204, G240 to I260, V274 to A294, and E302 to L322.

It belongs to the binding-protein-dependent transport system permease family. FecCD subfamily. The complex is composed of two ATP-binding proteins (BtuD), two transmembrane proteins (BtuC) and a solute-binding protein (BtuF).

The protein localises to the cell inner membrane. In terms of biological role, part of the ABC transporter complex BtuCDF involved in vitamin B12 import. Involved in the translocation of the substrate across the membrane. The protein is Vitamin B12 import system permease protein BtuC of Escherichia coli O127:H6 (strain E2348/69 / EPEC).